The sequence spans 637 residues: 1-deoxy-D-xylulose-5-phosphate synthase (637 aa).

Thiamine diphosphate contacts are provided by residues His73 and 113 to 115; that span reads SHA. Asp145 lines the Mg(2+) pocket. Thiamine diphosphate is bound by residues 146-147, Asn175, Tyr286, and Glu367; that span reads GA. Position 175 (Asn175) interacts with Mg(2+).

This sequence belongs to the transketolase family. DXPS subfamily. In terms of assembly, homodimer. Mg(2+) is required as a cofactor. Thiamine diphosphate serves as cofactor.

The enzyme catalyses D-glyceraldehyde 3-phosphate + pyruvate + H(+) = 1-deoxy-D-xylulose 5-phosphate + CO2. It functions in the pathway metabolic intermediate biosynthesis; 1-deoxy-D-xylulose 5-phosphate biosynthesis; 1-deoxy-D-xylulose 5-phosphate from D-glyceraldehyde 3-phosphate and pyruvate: step 1/1. In terms of biological role, catalyzes the acyloin condensation reaction between C atoms 2 and 3 of pyruvate and glyceraldehyde 3-phosphate to yield 1-deoxy-D-xylulose-5-phosphate (DXP). This chain is 1-deoxy-D-xylulose-5-phosphate synthase, found in Thermobifida fusca (strain YX).